The primary structure comprises 159 residues: Ribosomal RNA large subunit methyltransferase H (159 aa).

S-adenosyl-L-methionine is bound by residues L76, G108, and 127–132 (FSKMTF).

It belongs to the RNA methyltransferase RlmH family. As to quaternary structure, homodimer.

The protein localises to the cytoplasm. The enzyme catalyses pseudouridine(1915) in 23S rRNA + S-adenosyl-L-methionine = N(3)-methylpseudouridine(1915) in 23S rRNA + S-adenosyl-L-homocysteine + H(+). Functionally, specifically methylates the pseudouridine at position 1915 (m3Psi1915) in 23S rRNA. This chain is Ribosomal RNA large subunit methyltransferase H, found in Clostridium tetani (strain Massachusetts / E88).